The primary structure comprises 83 residues: Small ribosomal subunit protein eS21 (83 aa).

Residue Met1 is modified to N-acetylmethionine. The residue at position 81 (Lys81) is an N6-acetyllysine.

It belongs to the eukaryotic ribosomal protein eS21 family. In terms of assembly, component of the 40S small ribosomal subunit.

The protein localises to the cytoplasm. It is found in the cytosol. The protein resides in the rough endoplasmic reticulum. Its function is as follows. Component of the small ribosomal subunit. The ribosome is a large ribonucleoprotein complex responsible for the synthesis of proteins in the cell. This is Small ribosomal subunit protein eS21 (Rps21) from Mus musculus (Mouse).